The chain runs to 295 residues: UDP-3-O-acyl-N-acetylglucosamine deacetylase (295 aa).

Zn(2+) contacts are provided by His-75, His-232, and Asp-236. The Proton donor role is filled by His-259.

It belongs to the LpxC family. Zn(2+) serves as cofactor.

It catalyses the reaction a UDP-3-O-[(3R)-3-hydroxyacyl]-N-acetyl-alpha-D-glucosamine + H2O = a UDP-3-O-[(3R)-3-hydroxyacyl]-alpha-D-glucosamine + acetate. It participates in glycolipid biosynthesis; lipid IV(A) biosynthesis; lipid IV(A) from (3R)-3-hydroxytetradecanoyl-[acyl-carrier-protein] and UDP-N-acetyl-alpha-D-glucosamine: step 2/6. In terms of biological role, catalyzes the hydrolysis of UDP-3-O-myristoyl-N-acetylglucosamine to form UDP-3-O-myristoylglucosamine and acetate, the committed step in lipid A biosynthesis. This is UDP-3-O-acyl-N-acetylglucosamine deacetylase from Helicobacter pylori (strain J99 / ATCC 700824) (Campylobacter pylori J99).